A 297-amino-acid chain; its full sequence is Homoserine kinase (297 aa).

An ATP-binding site is contributed by 82-92 (PLTRGLGSSAS).

It belongs to the GHMP kinase family. Homoserine kinase subfamily.

It localises to the cytoplasm. The catalysed reaction is L-homoserine + ATP = O-phospho-L-homoserine + ADP + H(+). It participates in amino-acid biosynthesis; L-threonine biosynthesis; L-threonine from L-aspartate: step 4/5. Functionally, catalyzes the ATP-dependent phosphorylation of L-homoserine to L-homoserine phosphate. The chain is Homoserine kinase from Bacillus anthracis (strain CDC 684 / NRRL 3495).